The sequence spans 180 residues: Oligoribonuclease (180 aa).

The Exonuclease domain maps to 7 to 170 (LIWIDLEMTG…DDIRESIAEL (164 aa)). The active site involves Tyr-128.

Belongs to the oligoribonuclease family.

It is found in the cytoplasm. 3'-to-5' exoribonuclease specific for small oligoribonucleotides. This Pseudomonas putida (strain ATCC 700007 / DSM 6899 / JCM 31910 / BCRC 17059 / LMG 24140 / F1) protein is Oligoribonuclease.